Reading from the N-terminus, the 321-residue chain is Trem-like transcript 2 protein (321 aa).

The N-terminal stretch at 1–18 is a signal peptide; the sequence is MAPAFLLLLLLWPQGCVS. Over 19–268 the chain is Extracellular; the sequence is GPSADSVYTK…PSIRHQDVYS (250 aa). The region spanning 20 to 121 is the Ig-like V-type domain; the sequence is PSADSVYTKV…ILYPLMGFQL (102 aa). 2 cysteine pairs are disulfide-bonded: cysteine 41/cysteine 105 and cysteine 56/cysteine 63. Asparagine 89 carries N-linked (GlcNAc...) asparagine glycosylation. Polar residues-rich tracts occupy residues 189–220 and 227–241; these read GYSF…NARD and SIST…RSPT. A disordered region spans residues 189 to 241; it reads GYSFTATSTTSQGPRRTMGSQTVTASPSNARDSSAGPESISTKSGDLSTRSPT. A helical membrane pass occupies residues 269–289; it reads TVLGVVLTLLVLMLIMVYGFW. Residues 290-321 lie on the Cytoplasmic side of the membrane; it reads KKRHMASYSMCSDPSTRDPPGRPEPYVEVYLI.

In terms of assembly, interacts with CD276 and this interaction enhances T-cell activation. In terms of tissue distribution, detected in cultured B-cells, T-cell leukemia and monocyte leukemia. Expressed constitutively on CD8 T-cells and induced on CD4 T-cells after activation.

Its subcellular location is the cell membrane. In terms of biological role, cell surface receptor that may play a role in the innate and adaptive immune response. Acts as a counter-receptor for CD276 and interaction with CD276 on T-cells enhances T-cell activation. This is Trem-like transcript 2 protein (TREML2) from Homo sapiens (Human).